Reading from the N-terminus, the 237-residue chain is MFEWIADPEAWISLVTLAALEIVLGIDNIIFINILVGRLPERQRQSGRILGLALAMLTRILLLMSLAWIMKLTAPLFTVFNQEISGRDLILLIGGLFLIIKSSGEIKEAINHQEHHESESKNKVSYLGVLIQIAVLDIVFSLDSVITAVGMASHLPVMILAIMIAVGVMMFAAKPIGDFVDTHPTLKILALAFLVLVGISLIAESLDIHIPKGYIYFAMGFSVVVEMINIRMRRLMK.

Helical transmembrane passes span 12 to 32, 49 to 69, 90 to 110, 126 to 146, 151 to 171, 188 to 208, and 210 to 230; these read ISLV…IIFI, ILGL…LAWI, ILLI…KEAI, YLGV…DSVI, MASH…VMMF, ILAL…SLDI, and IPKG…MINI.

This sequence belongs to the UPF0053 family.

Its subcellular location is the cell membrane. The sequence is that of UPF0053 protein HI_0056 from Haemophilus influenzae (strain ATCC 51907 / DSM 11121 / KW20 / Rd).